The following is a 299-amino-acid chain: 4-diphosphocytidyl-2-C-methyl-D-erythritol kinase (299 aa).

K22 is an active-site residue. 108–118 (PVGAGLGGGSS) is a binding site for ATP. D150 is an active-site residue.

The protein belongs to the GHMP kinase family. IspE subfamily.

The enzyme catalyses 4-CDP-2-C-methyl-D-erythritol + ATP = 4-CDP-2-C-methyl-D-erythritol 2-phosphate + ADP + H(+). It functions in the pathway isoprenoid biosynthesis; isopentenyl diphosphate biosynthesis via DXP pathway; isopentenyl diphosphate from 1-deoxy-D-xylulose 5-phosphate: step 3/6. In terms of biological role, catalyzes the phosphorylation of the position 2 hydroxy group of 4-diphosphocytidyl-2C-methyl-D-erythritol. The polypeptide is 4-diphosphocytidyl-2-C-methyl-D-erythritol kinase (Desulfotalea psychrophila (strain LSv54 / DSM 12343)).